We begin with the raw amino-acid sequence, 339 residues long: Anthranilate phosphoribosyltransferase (339 aa).

Residues Gly-79, Gly-82–Asp-83, Ser-87, Asn-89–Thr-92, Lys-107–Ser-115, and Ser-119 each bind 5-phospho-alpha-D-ribose 1-diphosphate. Residue Gly-79 coordinates anthranilate. Mg(2+) is bound at residue Ser-91. Asn-110 serves as a coordination point for anthranilate. Arg-165 is an anthranilate binding site. Positions 224 and 225 each coordinate Mg(2+).

It belongs to the anthranilate phosphoribosyltransferase family. Homodimer. The cofactor is Mg(2+).

The catalysed reaction is N-(5-phospho-beta-D-ribosyl)anthranilate + diphosphate = 5-phospho-alpha-D-ribose 1-diphosphate + anthranilate. It participates in amino-acid biosynthesis; L-tryptophan biosynthesis; L-tryptophan from chorismate: step 2/5. Its function is as follows. Catalyzes the transfer of the phosphoribosyl group of 5-phosphorylribose-1-pyrophosphate (PRPP) to anthranilate to yield N-(5'-phosphoribosyl)-anthranilate (PRA). The chain is Anthranilate phosphoribosyltransferase from Listeria welshimeri serovar 6b (strain ATCC 35897 / DSM 20650 / CCUG 15529 / CIP 8149 / NCTC 11857 / SLCC 5334 / V8).